The sequence spans 393 residues: NAD(P)H-quinone oxidoreductase subunit H, chloroplastic (393 aa).

It belongs to the complex I 49 kDa subunit family. NDH is composed of at least 16 different subunits, 5 of which are encoded in the nucleus.

It is found in the plastid. It localises to the chloroplast thylakoid membrane. It carries out the reaction a plastoquinone + NADH + (n+1) H(+)(in) = a plastoquinol + NAD(+) + n H(+)(out). The enzyme catalyses a plastoquinone + NADPH + (n+1) H(+)(in) = a plastoquinol + NADP(+) + n H(+)(out). Its function is as follows. NDH shuttles electrons from NAD(P)H:plastoquinone, via FMN and iron-sulfur (Fe-S) centers, to quinones in the photosynthetic chain and possibly in a chloroplast respiratory chain. The immediate electron acceptor for the enzyme in this species is believed to be plastoquinone. Couples the redox reaction to proton translocation, and thus conserves the redox energy in a proton gradient. The sequence is that of NAD(P)H-quinone oxidoreductase subunit H, chloroplastic from Zygnema circumcarinatum (Green alga).